The following is an 83-amino-acid chain: Cytochrome c oxidase subunit 7A2, mitochondrial (83 aa).

The transit peptide at 1–23 (MLRNLLALRQIGQRTISTASRRH) directs the protein to the mitochondrion. Over 24–48 (FKNKVPEKQKLFQEDDEIPLYLKGG) the chain is Mitochondrial matrix. Lys33 bears the N6-acetyllysine mark. The chain crosses the membrane as a helical span at residues 49 to 77 (VADALLYRATMILTVGGTAYAIYELAVAS). Over 78-83 (FPKKQE) the chain is Mitochondrial intermembrane.

The protein belongs to the cytochrome c oxidase VIIa family. In terms of assembly, component of the cytochrome c oxidase (complex IV, CIV), a multisubunit enzyme composed of 14 subunits. The complex is composed of a catalytic core of 3 subunits MT-CO1, MT-CO2 and MT-CO3, encoded in the mitochondrial DNA, and 11 supernumerary subunits COX4I1 (or COX4I2), COX5A, COX5B, COX6A1 (or COX6A2), COX6B1 (or COX6B2), COX6C, COX7A2 (or COX7A1), COX7B, COX7C, COX8A and NDUFA4, which are encoded in the nuclear genome. The complex exists as a monomer or a dimer and forms supercomplexes (SCs) in the inner mitochondrial membrane with NADH-ubiquinone oxidoreductase (complex I, CI) and ubiquinol-cytochrome c oxidoreductase (cytochrome b-c1 complex, complex III, CIII), resulting in different assemblies (supercomplex SCI(1)III(2)IV(1) and megacomplex MCI(2)III(2)IV(2)). Interacts with PET100.

The protein resides in the mitochondrion inner membrane. Its pathway is energy metabolism; oxidative phosphorylation. Its function is as follows. Component of the cytochrome c oxidase, the last enzyme in the mitochondrial electron transport chain which drives oxidative phosphorylation. The respiratory chain contains 3 multisubunit complexes succinate dehydrogenase (complex II, CII), ubiquinol-cytochrome c oxidoreductase (cytochrome b-c1 complex, complex III, CIII) and cytochrome c oxidase (complex IV, CIV), that cooperate to transfer electrons derived from NADH and succinate to molecular oxygen, creating an electrochemical gradient over the inner membrane that drives transmembrane transport and the ATP synthase. Cytochrome c oxidase is the component of the respiratory chain that catalyzes the reduction of oxygen to water. Electrons originating from reduced cytochrome c in the intermembrane space (IMS) are transferred via the dinuclear copper A center (CU(A)) of subunit 2 and heme A of subunit 1 to the active site in subunit 1, a binuclear center (BNC) formed by heme A3 and copper B (CU(B)). The BNC reduces molecular oxygen to 2 water molecules using 4 electrons from cytochrome c in the IMS and 4 protons from the mitochondrial matrix. This is Cytochrome c oxidase subunit 7A2, mitochondrial (COX7A2) from Homo sapiens (Human).